Consider the following 311-residue polypeptide: Probable manganese-dependent inorganic pyrophosphatase (311 aa).

Mn(2+) contacts are provided by His9, Asp13, Asp15, Asp77, His99, and Asp151.

The protein belongs to the PPase class C family. The cofactor is Mn(2+).

It localises to the cytoplasm. The catalysed reaction is diphosphate + H2O = 2 phosphate + H(+). This chain is Probable manganese-dependent inorganic pyrophosphatase, found in Streptococcus agalactiae serotype III (strain NEM316).